The primary structure comprises 496 residues: Protein TOO MANY MOUTHS (496 aa).

Positions 1–23 (MARYEFFRQIFIVLSIVSPLVRS) are cleaved as a signal peptide. Over 24-473 (FTVITSDSTA…ATDVSSTSKS (450 aa)) the chain is Extracellular. LRR repeat units follow at residues 158 to 182 (GSSL…LGNL), 183 to 208 (TNLK…RFSG), 210 to 228 (RSLD…GFVL), 229 to 252 (PALS…LTSC), 254 to 276 (SLIK…INRL), 277 to 300 (NQLV…LQGL), 302 to 325 (SLQA…AFKG), 326 to 350 (LKNL…LTRL), 351 to 373 (NSLR…EFRD), and 375 to 401 (KHLS…VWRM). N-linked (GlcNAc...) asparagine glycosylation is found at N181 and N196. An N-linked (GlcNAc...) asparagine glycan is attached at N362. The disordered stretch occupies residues 438-464 (AETSRPAPSGTVQHLSREEDGALPDGA). The chain crosses the membrane as a helical span at residues 474–494 (LGFSYLSAFFLVFPNFIFMLI). The Cytoplasmic segment spans residues 495–496 (SS).

This sequence belongs to the RLP family. In terms of assembly, forms heterodimer with ERECTA or ERL1 through their extracellular domains. Not able to form homodimer. Interacts with EPF2 but not with EPF1. Interacts with SERK1, SERK2, SERK3/BAK1 and SERK4. Interacts with EPFL9/STOMAGEN. As to expression, in epidermal cells of developing shoots and leaves, but not in roots. Expressed in the stomatal cell lineage in the developing epidermis. Accumulates strongly in meristemoid mother cells (MMC) and meristemoids, somewhat less in meristemoid sister cells (stomatal-lineage ground cells, SLGC), and is barely detected in pavement cells.

The protein localises to the cell membrane. In terms of biological role, promotes cell fate progression in stomatal development. In leaves, needed to correctly orient spacing divisions, to limit the number of asymmetric divisions in neighbor cells, and to promote the asymmetric (amplifying) divisions of meristemoids. In stems, promotes the conversion of meristemoids into guard mother cells (GMC). Positively regulates CAPRICE (CPC) expression in differentiating stomaless-forming cell files. Forms constitutive complexes with ERECTA and ERL1 involved in the recognition of the stomatal regulatory peptides EPF1, EPF2 and EPFL9/STOMAGEN. Modulates the activity of the ligand-receptor pairs EPF2-ERECTA and EPF1-ERL1 in stomatal development. Functions in a combinatorial specific manner with the ERECTA-family (ERf) receptor kinases in the regulation of the immune response. The protein is Protein TOO MANY MOUTHS of Arabidopsis thaliana (Mouse-ear cress).